Consider the following 445-residue polypeptide: Anthranilate N-benzoyltransferase protein 3 (445 aa).

Catalysis depends on proton acceptor residues His-164 and Asp-392.

The protein belongs to the plant acyltransferase family. N-terminus is blocked.

The enzyme catalyses anthranilate + benzoyl-CoA = N-benzoylanthranilate + CoA. It participates in phytoalexin biosynthesis; methoxydianthramide B biosynthesis. Catalyzes the formation of N-benzoylanthranilate, in the course of methoxydianthramide B, a phytoalexin. Phytoalexins are produced in response to infection by parasites, and are essential for the expression of disease resistance. The chain is Anthranilate N-benzoyltransferase protein 3 (HCBT3) from Dianthus caryophyllus (Carnation).